The primary structure comprises 137 residues: Methylglyoxal synthase (137 aa).

The region spanning M1–I137 is the MGS-like domain. Substrate is bound by residues H8, K12, T34–T37, and S54–G55. Catalysis depends on D60, which acts as the Proton donor/acceptor. Residue H87 participates in substrate binding.

The protein belongs to the methylglyoxal synthase family.

It carries out the reaction dihydroxyacetone phosphate = methylglyoxal + phosphate. Its function is as follows. Catalyzes the formation of methylglyoxal from dihydroxyacetone phosphate. In Clostridioides difficile (strain 630) (Peptoclostridium difficile), this protein is Methylglyoxal synthase.